Here is a 125-residue protein sequence, read N- to C-terminus: Small ribosomal subunit protein uS12 (125 aa).

The segment at R9–R31 is disordered. The residue at position 89 (D89) is a 3-methylthioaspartic acid.

Belongs to the universal ribosomal protein uS12 family. As to quaternary structure, part of the 30S ribosomal subunit. Contacts proteins S8 and S17. May interact with IF1 in the 30S initiation complex.

In terms of biological role, with S4 and S5 plays an important role in translational accuracy. Functionally, interacts with and stabilizes bases of the 16S rRNA that are involved in tRNA selection in the A site and with the mRNA backbone. Located at the interface of the 30S and 50S subunits, it traverses the body of the 30S subunit contacting proteins on the other side and probably holding the rRNA structure together. The combined cluster of proteins S8, S12 and S17 appears to hold together the shoulder and platform of the 30S subunit. In Verminephrobacter eiseniae (strain EF01-2), this protein is Small ribosomal subunit protein uS12.